We begin with the raw amino-acid sequence, 426 residues long: DNA polymerase processivity factor component OPG148 (426 aa).

The protein belongs to the orthopoxvirus OPG148 family. As to quaternary structure, interacts with the DNA polymerase catalytic subunit OPG071. Interacts with UDG/OPG116. Component of the uracil-DNA glycosylase(UDG)-OPG148-polymerase complex; OPG148 and UDG form a heterodimeric processivity factor that associates with OPG071 to form the processive polymerase holoenzyme. Interacts with OPG117.

Functionally, plays an essential role in viral DNA replication by acting as the polymerase processivity factor together with protein OPG116. Serves as a bridge which links the DNA polymerase OPG071 and the uracil DNA glycosylase. The chain is DNA polymerase processivity factor component OPG148 (OPG148) from Vaccinia virus (strain Copenhagen) (VACV).